The primary structure comprises 232 residues: Thrombin-like enzyme BjussuSP-1 (232 aa).

The region spanning 1 to 223 (VLGGDECDIN…YTDWIQRNIA (223 aa)) is the Peptidase S1 domain. 6 disulfide bridges follow: C7-C138, C25-C41, C73-C230, C117-C184, C149-C163, and C174-C199. The Charge relay system role is filled by H40. N-linked (GlcNAc...) asparagine glycosylation is present at N77. The Charge relay system role is filled by D85. Residue N129 is glycosylated (N-linked (GlcNAc...) asparagine). Catalysis depends on S178, which acts as the Charge relay system.

It belongs to the peptidase S1 family. Snake venom subfamily. Monomer. N-glycosylated. Contains sialic acid residues. Deglycosylation reduces in 50% the formation of fibrin clot. In terms of tissue distribution, expressed by the venom gland.

It localises to the secreted. Inhibited by leupeptin, heparin, and 1.10-phenantroline. Its function is as follows. Thrombin-like enzyme that shows clotting activity upon human plasma. Shows specific fibrinogenolytic activity for Aalpha chain (FGA). Hydrolyzes fibrin, BAPNA and TAME, as well as chromogenic artificial substrates of the blood coagulation cascasde: S-27654 for factor X (F10), S-2302 for kallikrein (KLK), factor XIa (F11), and XIIa (F12), and S-2266 for kallikrein and factor XIa (F11). Subcutaneous injection into mice induces a mild edema. Intravenous and intramuscular injection reduce plasma fibrinogen concentration and increase the levels of fibrin(ogen) degradation products. Intramuscular injection also promotes an increase in the expression of proMMP-9, but is unable to activate it. This is Thrombin-like enzyme BjussuSP-1 from Bothrops jararacussu (Jararacussu).